The following is a 638-amino-acid chain: Cell division control protein 45 homolog (638 aa).

The disordered stretch occupies residues 151–204 (ELSDEENSDSSNEREEEVEDDNRSVESYSSSDYQARSRRRFSEETTQRRAEIKE). The segment covering 153-170 (SDEENSDSSNEREEEVED) has biased composition (acidic residues). Over residues 190 to 204 (RFSEETTQRRAEIKE) the composition is skewed to basic and acidic residues.

Belongs to the CDC45 family. As to quaternary structure, interacts with sld3.

It localises to the nucleus. Required for initiation of chromosomal DNA replication. May have a role in regulating the MCM proteins nda1 and nda4. In Schizosaccharomyces pombe (strain 972 / ATCC 24843) (Fission yeast), this protein is Cell division control protein 45 homolog (sna41).